The chain runs to 224 residues: Putative gastrointestinal growth factor xP4 (224 aa).

Residues 1 to 17 (MANSVFWAIAVALVLGA) form the signal peptide. P-type domains follow at residues 25–68 (YRCG…YTPW), 73–117 (TICN…YQPI), 123–167 (RDCS…FKPE), and 173–216 (LQCA…FYPD). Disulfide bonds link cysteine 27/cysteine 53, cysteine 37/cysteine 52, cysteine 47/cysteine 64, cysteine 75/cysteine 102, cysteine 86/cysteine 101, cysteine 96/cysteine 113, cysteine 125/cysteine 152, cysteine 136/cysteine 151, cysteine 146/cysteine 163, cysteine 175/cysteine 201, cysteine 185/cysteine 200, and cysteine 195/cysteine 212. Asparagine 104 carries an N-linked (GlcNAc...) asparagine glycan.

In terms of processing, glycosylated. In terms of tissue distribution, stomach mucosa.

The protein localises to the secreted. Functionally, may act as a growth factor. This Xenopus laevis (African clawed frog) protein is Putative gastrointestinal growth factor xP4 (p4).